Reading from the N-terminus, the 1070-residue chain is DNA-directed RNA polymerase subunit beta (1070 aa).

The protein belongs to the RNA polymerase beta chain family. As to quaternary structure, in plastids the minimal PEP RNA polymerase catalytic core is composed of four subunits: alpha, beta, beta', and beta''. When a (nuclear-encoded) sigma factor is associated with the core the holoenzyme is formed, which can initiate transcription.

Its subcellular location is the plastid. It is found in the chloroplast. It catalyses the reaction RNA(n) + a ribonucleoside 5'-triphosphate = RNA(n+1) + diphosphate. In terms of biological role, DNA-dependent RNA polymerase catalyzes the transcription of DNA into RNA using the four ribonucleoside triphosphates as substrates. The chain is DNA-directed RNA polymerase subunit beta from Gossypium hirsutum (Upland cotton).